Consider the following 257-residue polypeptide: AA9 family lytic polysaccharide monooxygenase U (257 aa).

An N-terminal signal peptide occupies residues 1 to 19 (MKLYLAAFLGAVATPGAFA). His20 contacts Cu(2+). Asn29 and Asn71 each carry an N-linked (GlcNAc...) asparagine glycan. Residues Cys74 and Cys194 are joined by a disulfide bond. His113 is a Cu(2+) binding site. An N-linked (GlcNAc...) asparagine glycan is attached at Asn161. Position 189 (Gln189) interacts with O2. A Cu(2+)-binding site is contributed by Tyr191.

The protein belongs to the polysaccharide monooxygenase AA9 family. Cu(2+) serves as cofactor.

The protein localises to the secreted. The catalysed reaction is [(1-&gt;4)-beta-D-glucosyl]n+m + reduced acceptor + O2 = 4-dehydro-beta-D-glucosyl-[(1-&gt;4)-beta-D-glucosyl]n-1 + [(1-&gt;4)-beta-D-glucosyl]m + acceptor + H2O.. Lytic polysaccharide monooxygenase (LPMO) that depolymerizes crystalline and amorphous polysaccharides via the oxidation of scissile alpha- or beta-(1-4)-glycosidic bonds, yielding C1 and C4 oxidation products. Catalysis by LPMOs requires the reduction of the active-site copper from Cu(II) to Cu(I) by a reducing agent and H(2)O(2) or O(2) as a cosubstrate. Shows no activity on wheat arabinoxylan, konjac glucomannan, acetylated spruce galactoglucomannan, or cellopentaose. The protein is AA9 family lytic polysaccharide monooxygenase U of Thermothielavioides terrestris (strain ATCC 38088 / NRRL 8126) (Thielavia terrestris).